We begin with the raw amino-acid sequence, 439 residues long: tRNA-2-methylthio-N(6)-dimethylallyladenosine synthase (439 aa).

The 114-residue stretch at 2–115 (KGLYIKTYGC…LPELIVKASR (114 aa)) folds into the MTTase N-terminal domain. Positions 11, 47, 78, 155, 159, and 162 each coordinate [4Fe-4S] cluster. In terms of domain architecture, Radical SAM core spans 141-372 (NSQGSSAFLA…QKLISKQQLE (232 aa)). Residues 375–439 (QSMVGKTIPV…QSSLLGCAFH (65 aa)) form the TRAM domain.

The protein belongs to the methylthiotransferase family. MiaB subfamily. Monomer. It depends on [4Fe-4S] cluster as a cofactor.

It localises to the cytoplasm. The catalysed reaction is N(6)-dimethylallyladenosine(37) in tRNA + (sulfur carrier)-SH + AH2 + 2 S-adenosyl-L-methionine = 2-methylsulfanyl-N(6)-dimethylallyladenosine(37) in tRNA + (sulfur carrier)-H + 5'-deoxyadenosine + L-methionine + A + S-adenosyl-L-homocysteine + 2 H(+). Catalyzes the methylthiolation of N6-(dimethylallyl)adenosine (i(6)A), leading to the formation of 2-methylthio-N6-(dimethylallyl)adenosine (ms(2)i(6)A) at position 37 in tRNAs that read codons beginning with uridine. This Wolbachia pipientis wMel protein is tRNA-2-methylthio-N(6)-dimethylallyladenosine synthase.